Reading from the N-terminus, the 549-residue chain is Guanine nucleotide-binding protein-like 3 (549 aa).

Residues 1–45 (MKRPKLKKASKRMTCHKRYKIQKKVREHHRKLRKEAKKRGHKKPR) show a composition bias toward basic residues. Disordered stretches follow at residues 1–56 (MKRP…SAPF) and 73–104 (ELKQQQKLDRQKELEKKRKLETNPDIKPSNVE). The segment at 2-46 (KRPKLKKASKRMTCHKRYKIQKKVREHHRKLRKEAKKRGHKKPRK) is basic. Residues 56–95 (FKEALLREAELRKQRLEELKQQQKLDRQKELEKKRKLETN) adopt a coiled-coil conformation. Residues 73–96 (ELKQQQKLDRQKELEKKRKLETNP) are compositionally biased toward basic and acidic residues. Residue Lys-79 is modified to N6-acetyllysine. Residues Lys-91 and Lys-99 each participate in a glycyl lysine isopeptide (Lys-Gly) (interchain with G-Cter in SUMO2) cross-link. Ser-101 is subject to Phosphoserine. Glycyl lysine isopeptide (Lys-Gly) (interchain with G-Cter in SUMO2) cross-links involve residues Lys-114, Lys-179, Lys-196, Lys-253, Lys-267, and Lys-275. A CP-type G domain is found at 131–312 (CQELKKVIEA…IIDSPSFIVS (182 aa)). A GTP-binding site is contributed by 178 to 181 (NKSD). Position 261–268 (261–268 (GFPNVGKS)) interacts with GTP. An intermediate region spans residues 282-456 (VGVSMGLTRS…HLANSILFQS (175 aa)). 305–308 (DSPS) contacts GTP. The acidic stretch occupies residues 465 to 543 (EEKDIHEELP…KIIEEDDAYD (79 aa)). The span at 474-483 (PKRKERKQEE) shows a compositional bias: basic and acidic residues. The interval 474 to 532 (PKRKERKQEEREDDKDSDQETVDEEVDENSSGMFAAEETGEALSEETTAGEQSTRSFIL) is disordered. A compositionally biased stretch (acidic residues) spans 484–501 (REDDKDSDQETVDEEVDE). Phosphoserine occurs at positions 490, 504, 517, and 529. A compositionally biased stretch (polar residues) spans 518–529 (EETTAGEQSTRS).

It belongs to the TRAFAC class YlqF/YawG GTPase family. Interacts with MDM2; this interaction stabilizes MDM2. Interaction with MDM2 occurs in the nucleoplasm and is triggered by a nucleolar release mechanism, such as mitosis-induced nucleolar disassembly. Indirectly interacts with TP53, via MDM2-binding. Interacts with TSC22D1 isoform 2. As to expression, increased levels in lung tissue in cancer patients.

Its subcellular location is the nucleus. The protein resides in the nucleolus. In terms of biological role, may be required to maintain the proliferative capacity of stem cells. Stabilizes MDM2 by preventing its ubiquitination, and hence proteasomal degradation. This is Guanine nucleotide-binding protein-like 3 (GNL3) from Homo sapiens (Human).